The sequence spans 653 residues: Amyloid beta A4 precursor protein-binding family B member 1-interacting protein (653 aa).

The interval 82-141 is disordered; sequence NNKSTAPFPPADASNSYHFHPPPMPSIITEDLSLLPPPPEFDPHYPPPPPDPLTEPKTQE. Positions 116–134 are enriched in pro residues; that stretch reads LPPPPEFDPHYPPPPPDPL. The Ras-associating domain occupies 165-253; that stretch reads KKRIVKVHMI…IHFLEKNEKY (89 aa). A PH domain is found at 295–404; the sequence is VPELEAALYL…WVTGIRIAKY (110 aa). The span at 462 to 481 shows a compositional bias: basic and acidic residues; sequence KHGEANKQEKKSSEVNKPET. Residues 462-653 form a disordered region; it reads KHGEANKQEK…ALQKKREPPT (192 aa). Over residues 585 to 604 the composition is skewed to pro residues; it reads PAPPPPPPPPAPAANVPPLP. The segment covering 605 to 614 has biased composition (basic residues); the sequence is VKKHPPKPPK.

The protein belongs to the MRL family.

Its subcellular location is the cell membrane. The protein resides in the cytoplasm. The protein localises to the cytoskeleton. Functionally, appears to function in the signal transduction from Ras activation to actin cytoskeletal remodeling. This Xenopus laevis (African clawed frog) protein is Amyloid beta A4 precursor protein-binding family B member 1-interacting protein (apbb1ip).